The chain runs to 365 residues: 1-deoxy-D-xylulose 5-phosphate reductoisomerase (365 aa).

Thr-7, Gly-8, Ser-9, Ile-10, Ala-31, Lys-32, Asn-33, and Asn-114 together coordinate NADPH. Lys-115 serves as a coordination point for 1-deoxy-D-xylulose 5-phosphate. Glu-116 contacts NADPH. Residue Asp-134 coordinates Mn(2+). Residues Ser-135, Glu-136, Ser-158, and His-181 each contribute to the 1-deoxy-D-xylulose 5-phosphate site. A Mn(2+)-binding site is contributed by Glu-136. Gly-187 is a binding site for NADPH. 1-deoxy-D-xylulose 5-phosphate-binding residues include Ser-194, Asn-199, Lys-200, and Glu-203. Glu-203 contacts Mn(2+).

Belongs to the DXR family. Mg(2+) serves as cofactor. Requires Mn(2+) as cofactor.

It catalyses the reaction 2-C-methyl-D-erythritol 4-phosphate + NADP(+) = 1-deoxy-D-xylulose 5-phosphate + NADPH + H(+). The protein operates within isoprenoid biosynthesis; isopentenyl diphosphate biosynthesis via DXP pathway; isopentenyl diphosphate from 1-deoxy-D-xylulose 5-phosphate: step 1/6. Catalyzes the NADPH-dependent rearrangement and reduction of 1-deoxy-D-xylulose-5-phosphate (DXP) to 2-C-methyl-D-erythritol 4-phosphate (MEP). In Campylobacter curvus (strain 525.92), this protein is 1-deoxy-D-xylulose 5-phosphate reductoisomerase.